The primary structure comprises 335 residues: 2-acylglycerol O-acyltransferase 1 (335 aa).

A run of 2 helical transmembrane segments spans residues Trp24–Leu44 and Tyr104–Thr124. Asn180 is a glycosylation site (N-linked (GlcNAc...) asparagine).

This sequence belongs to the diacylglycerol acyltransferase family. In terms of tissue distribution, expressed at high level in kidney and stomach. Expressed at lower level in brown and white adipose tissue, uterus and liver. Not detected in small intestine.

Its subcellular location is the endoplasmic reticulum membrane. It catalyses the reaction a 2-acylglycerol + an acyl-CoA = a 1,2-diacylglycerol + CoA. The catalysed reaction is 2-(9Z-octadecenoyl)-glycerol + butanoyl-CoA = 1-butanoyl-2-(9Z-octadecenoyl)-glycerol + CoA. The enzyme catalyses 2-(9Z-octadecenoyl)-glycerol + octanoyl-CoA = 1-octanoyl-2-(9Z-octadecenoyl)-glycerol + CoA. It carries out the reaction 2-(9Z-octadecenoyl)-glycerol + dodecanoyl-CoA = 1-dodecanoyl-2-(9Z-octadecenoyl)-glycerol + CoA. It catalyses the reaction 2-(9Z-octadecenoyl)-glycerol + tetradecanoyl-CoA = 1-tetradecanoyl-2-(9Z-octadecenoyl)-glycerol + CoA. The catalysed reaction is 2-(9Z-octadecenoyl)-glycerol + hexadecanoyl-CoA = 1-hexadecanoyl-2-(9Z-octadecenoyl)-glycerol + CoA. The enzyme catalyses 2-(9Z-octadecenoyl)-glycerol + octadecanoyl-CoA = 1-octadecanoyl-2-(9Z-octadecenoyl)-glycerol + CoA. It carries out the reaction eicosanoyl-CoA + 2-(9Z-octadecenoyl)-glycerol = 1-eicosanoyl-2-(9Z-octadecenoyl)-glycerol + CoA. It catalyses the reaction 2-(9Z-octadecenoyl)-glycerol + (9Z)-octadecenoyl-CoA = 1,2-di-(9Z-octadecenoyl)-glycerol + CoA. The catalysed reaction is 2-(9Z-octadecenoyl)-glycerol + (9Z,12Z)-octadecadienoyl-CoA = 1-(9Z,12Z-octadecadienoyl)-2-(9Z-octadecenoyl)-glycerol + CoA. The enzyme catalyses 2-(9Z-octadecenoyl)-glycerol + (5Z,8Z,11Z,14Z)-eicosatetraenoyl-CoA = 1-(5Z,8Z,11Z,14Z-eicosatetraenoyl)-2-(9Z-octadecenoyl)-glycerol + CoA. It carries out the reaction a 2-acylglycerol + an acyl-CoA = a 1,2-diacyl-sn-glycerol + CoA. It catalyses the reaction a 2-acylglycerol + an acyl-CoA = a 2,3-diacyl-sn-glycerol + CoA. The catalysed reaction is a 1-acylglycerol + an acyl-CoA = a 1,2-diacylglycerol + CoA. The enzyme catalyses 1-dodecanoylglycerol + (9Z)-octadecenoyl-CoA = 1-dodecanoyl-2-(9Z-octadecenoyl)-glycerol + CoA. It carries out the reaction 1-tetradecanoylglycerol + (9Z)-octadecenoyl-CoA = 1-tetradecanoyl-2-(9Z-octadecenoyl)-glycerol + CoA. It catalyses the reaction 1-hexadecanoylglycerol + (9Z)-octadecenoyl-CoA = 1-hexadecanoyl-2-(9Z-octadecenoyl)-glycerol + CoA. The catalysed reaction is 1-(9Z-octadecenoyl)-glycerol + (9Z)-octadecenoyl-CoA = 1,2-di-(9Z-octadecenoyl)-glycerol + CoA. The enzyme catalyses 1-(9Z,12Z-octadecadienoyl)-glycerol + (9Z)-octadecenoyl-CoA = 1-(9Z,12Z-octadecadienoyl)-2-(9Z-octadecenoyl)-glycerol + CoA. It carries out the reaction 1-(9Z,12Z,15Z-octadecatrienoyl)-glycerol + (9Z)-octadecenoyl-CoA = 1-(9Z,12Z,15Z-octadecatrienoyl)-2-(9Z-octadecenoyl)-glycerol + CoA. It catalyses the reaction 1-(5Z,8Z,11Z,14Z-eicosatetraenoyl)-glycerol + (9Z)-octadecenoyl-CoA = 1-(5Z,8Z,11Z,14Z-eicosatetraenoyl)-2-(9Z-octadecenoyl)-glycerol + CoA. The catalysed reaction is a 1-acylglycerol + an acyl-CoA = a 1,3-diacylglycerol + CoA. The enzyme catalyses 1-dodecanoylglycerol + (9Z)-octadecenoyl-CoA = 1-dodecanoyl-3-(9Z-octadecenoyl)-glycerol + CoA. It carries out the reaction 1-hexadecanoylglycerol + (9Z)-octadecenoyl-CoA = 1-(9Z-octadecenoyl)-3-hexadecanoylglycerol + CoA. It catalyses the reaction 1-octadecanoylglycerol + (9Z)-octadecenoyl-CoA = 1-octadecanoyl-3-(9Z-octadecenoyl)-glycerol + CoA. The catalysed reaction is 1-(9Z-octadecenoyl)-sn-glycerol + (9Z)-octadecenoyl-CoA = 1,3-di-(9Z-octadecenoyl)-glycerol + CoA. The enzyme catalyses 1-(9Z,12Z-octadecadienoyl)-glycerol + (9Z)-octadecenoyl-CoA = 1-(9Z-octadecenoyl)-3-(9Z,12Z-octadecadienoyl)-glycerol + CoA. It carries out the reaction 1-(9Z,12Z,15Z-octadecatrienoyl)-glycerol + (9Z)-octadecenoyl-CoA = 1-(9Z,12Z,15Z-octadecatrienoyl)-3-(9Z-octadecenoyl)-glycerol + CoA. It catalyses the reaction a 1-acyl-sn-glycerol + an acyl-CoA = a 1,3-diacyl-sn-glycerol + CoA. The catalysed reaction is a 3-acyl-sn-glycerol + an acyl-CoA = a 1,3-diacyl-sn-glycerol + CoA. The enzyme catalyses 3-octadecanoyl-sn-glycerol + (9Z)-octadecenoyl-CoA = 1-(9Z-octadecenoyl)-3-octadecanoyl-sn-glycerol + CoA. The protein operates within glycerolipid metabolism; triacylglycerol biosynthesis. Involved in glycerolipid synthesis and lipid metabolism. Catalyzes the formation of diacylglycerol, the precursor of triacylglycerol, by transferring the acyl chain of a fatty acyl-CoA to a monoacylglycerol, mainly at the sn-1 or sn-3 positions. It uses both sn-2-monoacylglycerol (2-acylglycerol) and sn-1-monoacylglycerol (1-acyl-sn-glycerol) equally well as substrates, and uses sn-3-monoacylglycerol (3-acyl-sn-glycerol) with lower efficiency. Probably not involved in absorption of dietary fat in the small intestine. The protein is 2-acylglycerol O-acyltransferase 1 of Mus musculus (Mouse).